The following is a 1074-amino-acid chain: MKGTCVIAWLFSSLGLWRLAHPEAQGTTQCQRTEHPVISYKEIGPWLREFRAKNAVDFSQLTFDPGQKELVVGARNYLFRLQLEDLSLIQAVEWECDEATKKACYSKGKSKEECQNYIRVLLVGGDRLFTCGTNAFTPVCTNRSLSNLTEIHDQISGMARCPYSPQHNSTALLTAGGELYAATAMDFPGRDPAIYRSLGILPPLRTAQYNSKWLNEPNFVSSYDIGNFTYFFFRENAVEHDCGKTVFSRAARVCKNDIGGRFLLEDTWTTFMKARLNCSRPGEVPFYYNELQSTFFLPELDLIYGIFTTNVNSIAASAVCVFNLSAIAQAFSGPFKYQENSRSAWLPYPNPNPHFQCGTVDQGLYVNLTERNLQDAQKFILMHEVVQPVTTVPSFMEDNSRFSHVAVDVVQGREALVHIIYLATDYGTIKKVRVPLNQTSSSCLLEEIELFPERRREPIRSLQILHSQSVLFVGLREHVVKIPLKRCQFYRTRSTCIGAQDPYCGWDVVMKKCTSLEESLSMTQWEQSISACPTRNLTVDGHFGVWSPWTPCTHTDGSAVGSCLCRTRSCDSPAPQCGGWQCEGPGMEIANCSRNGGWTPWTSWSPCSTTCGIGFQVRQRSCSNPTPRHGGRVCVGQNREERYCNEHLLCPPHMFWTGWGPWERCTAQCGGGIQARRRICENGPDCAGCNVEYQSCNTNPCPELKKTTPWTPWTPVNISDNGGHYEQRFRYTCKARLADPNLLEVGRQRIEMRYCSSDGTSGCSTDGLSGDFLRAGRYSAHTVNGAWSAWTSWSQCSRDCSRGIRNRKRVCNNPEPKYGGMPCLGPSLEYQECNILPCPVDGVWSCWSPWTKCSATCGGGHYMRTRSCSNPAPAYGGDICLGLHTEEALCNTQPCPESWSEWSDWSECEASGVQVRARQCILLFPMGSQCSGNTTESRPCVFDSNFIPEVSVARSSSVEEKRCGEFNMFHMIAVGLSSSILGCLLTLLVYTYCQRYQQQSHDATVIHPVSPAPLNTSITNHINKLDKYDSVEAIKAFNKNNLILEERNKYFNPHLTGKTYSNAYFTDLNNYDEY.

The first 22 residues, 1-22 (MKGTCVIAWLFSSLGLWRLAHP), serve as a signal peptide directing secretion. The Extracellular segment spans residues 23–968 (EAQGTTQCQR…EEKRCGEFNM (946 aa)). The Sema domain maps to 35–484 (HPVISYKEIG…LREHVVKIPL (450 aa)). Cystine bridges form between cysteine 104–cysteine 114 and cysteine 131–cysteine 140. Asparagine 142, asparagine 168, asparagine 227, and asparagine 277 each carry an N-linked (GlcNAc...) asparagine glycan. 2 disulfides stabilise this stretch: cysteine 254/cysteine 357 and cysteine 278/cysteine 320. Residues asparagine 323, asparagine 367, and asparagine 437 are each glycosylated (N-linked (GlcNAc...) asparagine). 2 disulfides stabilise this stretch: cysteine 487/cysteine 504 and cysteine 496/cysteine 513. N-linked (GlcNAc...) asparagine glycosylation is found at asparagine 536 and asparagine 591. TSP type-1 domains lie at 540-593 (DGHF…ANCS), 595-651 (NGGW…LLCP), 653-702 (HMFW…NPCP), 707-765 (TTPW…GCST), 784-839 (NGAW…LPCP), 841-896 (DGVW…QPCP), and 897-944 (ESWS…VFDS). 6 disulfide bridges follow: cysteine 607-cysteine 644, cysteine 611-cysteine 650, cysteine 622-cysteine 634, cysteine 665-cysteine 696, cysteine 669-cysteine 701, and cysteine 680-cysteine 686. A glycan (N-linked (GlcNAc...) asparagine) is linked at asparagine 717. Disulfide bonds link cysteine 796/cysteine 833, cysteine 800/cysteine 838, cysteine 811/cysteine 823, cysteine 853/cysteine 890, cysteine 857/cysteine 895, and cysteine 868/cysteine 880. Residue asparagine 933 is glycosylated (N-linked (GlcNAc...) asparagine). The chain crosses the membrane as a helical span at residues 969–989 (FHMIAVGLSSSILGCLLTLLV). Residues 990–1074 (YTYCQRYQQQ…FTDLNNYDEY (85 aa)) lie on the Cytoplasmic side of the membrane.

The protein belongs to the semaphorin family. In terms of assembly, binds PLXNB3.

Its subcellular location is the membrane. Its function is as follows. Bifunctional axonal guidance cue regulated by sulfated proteoglycans; attractive effects result from interactions with heparan sulfate proteoglycans (HSPGs), while the inhibitory effects depend on interactions with chondroitin sulfate proteoglycans (CSPGs). Ligand for receptor PLXNB3. In glioma cells, SEMA5A stimulation of PLXNB3 results in the disassembly of F-actin stress fibers, disruption of focal adhesions and cellular collapse as well as inhibition of cell migration and invasion through ARHGDIA-mediated inactivation of RAC1. May promote angiogenesis by increasing endothelial cell proliferation and migration and inhibiting apoptosis. This chain is Semaphorin-5A (SEMA5A), found in Homo sapiens (Human).